The sequence spans 548 residues: Frizzled-7 (548 aa).

Residues 1–19 (MFATVSLLFCLLLQPSPSA) form the signal peptide. The Extracellular portion of the chain corresponds to 20-230 (QQYHGEKGIS…EEEVRFARLW (211 aa)). One can recognise an FZ domain in the interval 31-150 (PDHGFCQPIS…HGAGEICVGQ (120 aa)). Cystine bridges form between C36–C97, C44–C90, C81–C118, C107–C147, and C111–C135. N50 carries N-linked (GlcNAc...) asparagine glycosylation. N151 is a glycosylation site (N-linked (GlcNAc...) asparagine). Residues 231 to 251 (VGIWAILCGISTLFTVLTYLV) form a helical membrane-spanning segment. The Cytoplasmic portion of the chain corresponds to 252–262 (DMRRFSYPERP). The helical transmembrane segment at 263-283 (IIFLSGCYFMVAVAYTAGFLL) threads the bilayer. Residues 284–310 (EERGVCVERFSEDSYRTVAQGTKKEGC) lie on the Extracellular side of the membrane. A helical membrane pass occupies residues 311–331 (TILFMILYFFGMASSIWWVIL). Topologically, residues 332-353 (SLTWFLAAGMKWGHEAIEANSQ) are cytoplasmic. Residues 354-374 (YFHLAAWAVPAVKTITILAMG) traverse the membrane as a helical segment. At 375-397 (QVDGDILSGVCYVGINSVDSLRG) the chain is on the extracellular side. The chain crosses the membrane as a helical span at residues 398–418 (FVLAPLFVYLFIGTSFLLAGF). Over 419 to 444 (VSLFRIRTIMKHDGTKTEKLEKLMVR) the chain is Cytoplasmic. Residues 445–465 (IGVFSVMYTVPATIVLACYFY) form a helical membrane-spanning segment. At 466–502 (EQAFRDTWEKTWLVQTCKGFAVPCPNYNFAPMSPDFT) the chain is on the extracellular side. Residues 503–523 (VFMIKYLMTMIVGITSSFWIW) form a helical membrane-spanning segment. Topologically, residues 524–548 (SGKTLQSWRRFYHRLSNGGKGETAV) are cytoplasmic. Positions 526-531 (KTLQSW) match the Lys-Thr-X-X-X-Trp motif, mediates interaction with the PDZ domain of Dvl family members motif. The short motif at 546–548 (TAV) is the PDZ-binding element.

It belongs to the G-protein coupled receptor Fz/Smo family. Interacts with wnt11 and sdc4. The extracellular domain interacts with the extracellular domain of pcdh8/papc.

It is found in the cell membrane. Its subcellular location is the endosome membrane. In terms of biological role, receptor for Wnt proteins. Acts in both canonical and non-canonical Wnt pathways. Although different papers report differing Wnt preferences, wnt5a, wnt8b and wnt11 have been proposed as synergists. In the canonical Wnt pathway, acts via beta-catenin to promote the expression of the dorsal genes siamois, twin and nodal3 and to establish the dorsal axis of the embryo and induce dorsal mesoderm formation. In a non-canonical Wnt/planar cell polarity (PCP) pathway, acts with sdc4 and dvl2/dsh to regulate convergent extension movements in gastrulation. Triggers phosphorylation of dvl2/dsh and its translocation to the plasma membrane. In a third branch of Wnt signaling, acts in a non-canonical pathway via trimeric G proteins, and independently of dvl2/dsh, to recruit protein kinase C (PKC) to the membrane and thus activate PKC. PKC signaling controls cell sorting and tissue separation during gastrulation. The protein is Frizzled-7 of Xenopus tropicalis (Western clawed frog).